The following is a 519-amino-acid chain: Laccase-2 (519 aa).

The N-terminal stretch at 1–20 is a signal peptide; the sequence is MGLQRFSFFVTLALVARSLA. 2 consecutive Plastocyanin-like domains span residues 22–147 and 159–301; these read IGPV…FVVY and VDNE…ILRY. N-linked (GlcNAc...) asparagine glycosylation occurs at N74. Cu cation contacts are provided by H84, H86, H129, and H131. Cystine bridges form between C105–C508 and C137–C225. N-linked (GlcNAc...) asparagine glycans are attached at residues N161, N228, N237, N271, N353, and N361. In terms of domain architecture, Plastocyanin-like 3 spans 368–490; sequence TVPVLLQILS…AGFAIVFAED (123 aa). Residues H415, H418, H420, H472, C473, H474, and H478 each contribute to the Cu cation site.

It belongs to the multicopper oxidase family. As to quaternary structure, homodimer. Cu cation serves as cofactor.

The protein localises to the secreted. The catalysed reaction is 4 hydroquinone + O2 = 4 benzosemiquinone + 2 H2O. Functionally, lignin degradation and detoxification of lignin-derived products. The chain is Laccase-2 from Trametes villosa (White-rot fungus).